The following is a 147-amino-acid chain: Cytochrome c-type biogenesis protein CcmE (147 aa).

Residues 1–9 (MKSLKKKRR) are Cytoplasmic-facing. A helical; Signal-anchor for type II membrane protein membrane pass occupies residues 10–30 (IQILVAAAVALVLAVGLIGYG). Residues 31–147 (FRDGINLYRS…EQGVYQEPNS (117 aa)) lie on the Periplasmic side of the membrane. Heme is bound by residues His123 and Tyr127.

It belongs to the CcmE/CycJ family.

It localises to the cell inner membrane. Functionally, heme chaperone required for the biogenesis of c-type cytochromes. Transiently binds heme delivered by CcmC and transfers the heme to apo-cytochromes in a process facilitated by CcmF and CcmH. The chain is Cytochrome c-type biogenesis protein CcmE from Paracoccus denitrificans (strain Pd 1222).